We begin with the raw amino-acid sequence, 299 residues long: UDP-N-acetylenolpyruvoylglucosamine reductase (299 aa).

The FAD-binding PCMH-type domain maps to 27-192 (KSGGAADWLF…VGATFRGRPG (166 aa)). Arginine 172 is a catalytic residue. The interval 206-225 (ASREASQPLRSRTGGSTFKN) is disordered. The span at 208–224 (REASQPLRSRTGGSTFK) shows a compositional bias: polar residues. Serine 221 serves as the catalytic Proton donor. The active site involves glutamate 291.

This sequence belongs to the MurB family. It depends on FAD as a cofactor.

It localises to the cytoplasm. The enzyme catalyses UDP-N-acetyl-alpha-D-muramate + NADP(+) = UDP-N-acetyl-3-O-(1-carboxyvinyl)-alpha-D-glucosamine + NADPH + H(+). It participates in cell wall biogenesis; peptidoglycan biosynthesis. Functionally, cell wall formation. This Sphingopyxis alaskensis (strain DSM 13593 / LMG 18877 / RB2256) (Sphingomonas alaskensis) protein is UDP-N-acetylenolpyruvoylglucosamine reductase.